The chain runs to 367 residues: Zinc metalloproteinase nas-22 (367 aa).

The first 16 residues, 1-16, serve as a signal peptide directing secretion; the sequence is MKSFFILLSILQECYG. The region spanning 41–237 is the Peptidase M12A domain; the sequence is VLIRGSDEER…LMINKYYECS (197 aa). N56 and N85 each carry an N-linked (GlcNAc...) asparagine glycan. 4 disulfide bridges follow: C88–C236, C111–C130, C238–C258, and C260–C269. H138 provides a ligand contact to Zn(2+). The active site involves E139. Residues H142 and H148 each coordinate Zn(2+). Residues N169, N241, and N254 are each glycosylated (N-linked (GlcNAc...) asparagine). The region spanning 232-270 is the EGF-like domain; that stretch reads KYYECSCANNLSCKNHGYPNPSNCSQCNCPYGFGGADCS. N-linked (GlcNAc...) asparagine glycosylation is found at N287 and N322.

It depends on Zn(2+) as a cofactor. Expressed in uterine seam (utse) cell.

It localises to the secreted. In terms of biological role, metalloprotease. The protein is Zinc metalloproteinase nas-22 (nas-22) of Caenorhabditis elegans.